We begin with the raw amino-acid sequence, 169 residues long: Transcription antitermination protein NusB (169 aa).

It belongs to the NusB family.

Involved in transcription antitermination. Required for transcription of ribosomal RNA (rRNA) genes. Binds specifically to the boxA antiterminator sequence of the ribosomal RNA (rrn) operons. The protein is Transcription antitermination protein NusB of Deinococcus geothermalis (strain DSM 11300 / CIP 105573 / AG-3a).